Here is a 254-residue protein sequence, read N- to C-terminus: Small ribosomal subunit protein uS2 (254 aa).

Belongs to the universal ribosomal protein uS2 family.

This is Small ribosomal subunit protein uS2 from Legionella pneumophila (strain Lens).